A 198-amino-acid polypeptide reads, in one-letter code: Endonuclease V (198 aa).

Mg(2+) is bound by residues Asp38 and Asp101.

It belongs to the endonuclease V family. Mg(2+) is required as a cofactor.

It is found in the cytoplasm. The catalysed reaction is Endonucleolytic cleavage at apurinic or apyrimidinic sites to products with a 5'-phosphate.. Its function is as follows. DNA repair enzyme involved in the repair of deaminated bases. Selectively cleaves double-stranded DNA at the second phosphodiester bond 3' to a deoxyinosine leaving behind the intact lesion on the nicked DNA. The polypeptide is Endonuclease V (Saccharolobus islandicus (strain M.14.25 / Kamchatka #1) (Sulfolobus islandicus)).